Consider the following 179-residue polypeptide: Inosine/xanthosine triphosphatase (179 aa).

Residue 8 to 13 (TTNPAK) coordinates substrate. Positions 38 and 68 each coordinate Mg(2+). 68–69 (EA) provides a ligand contact to substrate.

Belongs to the YjjX NTPase family. In terms of assembly, homodimer. Requires Mg(2+) as cofactor. The cofactor is Mn(2+).

It carries out the reaction XTP + H2O = XDP + phosphate + H(+). The enzyme catalyses ITP + H2O = IDP + phosphate + H(+). Functionally, phosphatase that hydrolyzes non-canonical purine nucleotides such as XTP and ITP to their respective diphosphate derivatives. Probably excludes non-canonical purines from DNA/RNA precursor pool, thus preventing their incorporation into DNA/RNA and avoiding chromosomal lesions. The protein is Inosine/xanthosine triphosphatase of Proteus mirabilis (strain HI4320).